Consider the following 303-residue polypeptide: Coenzyme PQQ synthesis protein B (303 aa).

This sequence belongs to the PqqB family.

It functions in the pathway cofactor biosynthesis; pyrroloquinoline quinone biosynthesis. Functionally, may be involved in the transport of PQQ or its precursor to the periplasm. In Pseudomonas entomophila (strain L48), this protein is Coenzyme PQQ synthesis protein B.